The chain runs to 217 residues: Small ribosomal subunit protein uS3c (217 aa).

Residues 46-117 (VQKHIKNSSN…RLRMTLIEIA (72 aa)) form the KH type-2 domain.

This sequence belongs to the universal ribosomal protein uS3 family. In terms of assembly, part of the 30S ribosomal subunit.

Its subcellular location is the plastid. The protein localises to the chloroplast. This is Small ribosomal subunit protein uS3c (rps3) from Marchantia polymorpha (Common liverwort).